The sequence spans 330 residues: NADH-quinone oxidoreductase subunit H (330 aa).

Transmembrane regions (helical) follow at residues 11–31 (ILVA…CGAL), 81–101 (FIFV…FAII), 114–134 (IGIL…LFAG), 154–174 (ISYE…VGSF), 187–207 (LWFI…GVAV), 238–258 (FFVG…TLFF), 270–290 (QIPF…FILL), and 309–329 (FCLP…LAAA).

It belongs to the complex I subunit 1 family. NDH-1 is composed of 13 different subunits. Subunits NuoA, H, J, K, L, M, N constitute the membrane sector of the complex.

The protein resides in the cell inner membrane. It carries out the reaction a quinone + NADH + 5 H(+)(in) = a quinol + NAD(+) + 4 H(+)(out). Its function is as follows. NDH-1 shuttles electrons from NADH, via FMN and iron-sulfur (Fe-S) centers, to quinones in the respiratory chain. The immediate electron acceptor for the enzyme in this species is believed to be ubiquinone. Couples the redox reaction to proton translocation (for every two electrons transferred, four hydrogen ions are translocated across the cytoplasmic membrane), and thus conserves the redox energy in a proton gradient. This subunit may bind ubiquinone. The protein is NADH-quinone oxidoreductase subunit H of Ectopseudomonas mendocina (strain ymp) (Pseudomonas mendocina).